The sequence spans 874 residues: Leucine--tRNA ligase (874 aa).

The 'HIGH' region motif lies at 43–53 (PYPSGRIHIGH). A 'KMSKS' region motif is present at residues 630 to 634 (KMSKS). Position 633 (K633) interacts with ATP.

It belongs to the class-I aminoacyl-tRNA synthetase family.

The protein localises to the cytoplasm. It carries out the reaction tRNA(Leu) + L-leucine + ATP = L-leucyl-tRNA(Leu) + AMP + diphosphate. The polypeptide is Leucine--tRNA ligase (Bradyrhizobium sp. (strain BTAi1 / ATCC BAA-1182)).